We begin with the raw amino-acid sequence, 122 residues long: Small ribosomal subunit protein uS13 (122 aa).

The disordered stretch occupies residues 93-122; sequence RRGLPVRGQRTKTNARTRKGPKKTIAGKKK.

It belongs to the universal ribosomal protein uS13 family. As to quaternary structure, part of the 30S ribosomal subunit. Forms a loose heterodimer with protein S19. Forms two bridges to the 50S subunit in the 70S ribosome.

Located at the top of the head of the 30S subunit, it contacts several helices of the 16S rRNA. In the 70S ribosome it contacts the 23S rRNA (bridge B1a) and protein L5 of the 50S subunit (bridge B1b), connecting the 2 subunits; these bridges are implicated in subunit movement. Contacts the tRNAs in the A and P-sites. This chain is Small ribosomal subunit protein uS13, found in Corynebacterium jeikeium (strain K411).